A 214-amino-acid chain; its full sequence is Cytochrome c biogenesis ATP-binding export protein CcmA (214 aa).

The 197-residue stretch at 16–212 (LRVSGLSLSR…PDAKRIDLGA (197 aa)) folds into the ABC transporter domain. Residue 48 to 55 (GPNGTGKT) coordinates ATP.

It belongs to the ABC transporter superfamily. CcmA exporter (TC 3.A.1.107) family. The complex is composed of two ATP-binding proteins (CcmA) and two transmembrane proteins (CcmB).

It is found in the cell inner membrane. The catalysed reaction is heme b(in) + ATP + H2O = heme b(out) + ADP + phosphate + H(+). In terms of biological role, part of the ABC transporter complex CcmAB involved in the biogenesis of c-type cytochromes; once thought to export heme, this seems not to be the case, but its exact role is uncertain. Responsible for energy coupling to the transport system. In Maricaulis maris (strain MCS10) (Caulobacter maris), this protein is Cytochrome c biogenesis ATP-binding export protein CcmA.